Consider the following 126-residue polypeptide: Fluoride-specific ion channel FluC (126 aa).

The next 4 membrane-spanning stretches (helical) occupy residues 5 to 25, 35 to 55, 68 to 88, and 99 to 119; these read VLAV…LGLW, WGTL…MAFF, FAVT…LEMF, and ALVG…LGFL. Gly-75 and Thr-78 together coordinate Na(+).

Belongs to the fluoride channel Fluc/FEX (TC 1.A.43) family.

The protein localises to the cell inner membrane. The catalysed reaction is fluoride(in) = fluoride(out). Na(+) is not transported, but it plays an essential structural role and its presence is essential for fluoride channel function. Its function is as follows. Fluoride-specific ion channel. Important for reducing fluoride concentration in the cell, thus reducing its toxicity. In Marinobacter nauticus (strain ATCC 700491 / DSM 11845 / VT8) (Marinobacter aquaeolei), this protein is Fluoride-specific ion channel FluC.